Consider the following 311-residue polypeptide: Olfactory receptor 14I1 (311 aa).

The Extracellular portion of the chain corresponds to 1-26; it reads MDNLTKVTEFLLMEFSGIWELQVLHA. N3 carries an N-linked (GlcNAc...) asparagine glycan. A helical membrane pass occupies residues 27-47; the sequence is GLFLLIYLAVLVGNLLIIAVI. The Cytoplasmic segment spans residues 48–55; sequence TLDQHLHT. A helical membrane pass occupies residues 56 to 76; sequence PMYFFLKNLSVLDLCYISVTV. Over 77–92 the chain is Extracellular; the sequence is PKSIRNSLTRRSSISY. The chain crosses the membrane as a helical span at residues 93 to 113; that stretch reads LGCVAQVYFFSAFASAELAFL. C95 and C188 are disulfide-bonded. At 114–141 the chain is on the cytoplasmic side; it reads TVMSYDRYVAICHPLQYRAVMTSGGCYQ. A helical transmembrane segment spans residues 142–162; that stretch reads MAVTTWLSCFSYAAVHTGNMF. At 163-189 the chain is on the extracellular side; the sequence is REHVCRSSVIHQFFRDIPHVLALVSCE. Residues 190-210 form a helical membrane-spanning segment; the sequence is VFFVEFLTLALSSCLVLGCFI. The Cytoplasmic portion of the chain corresponds to 211–241; sequence LMMISYFQIFSTVLRIPSGQSRAKAFSTCSP. Residues 242 to 262 traverse the membrane as a helical segment; sequence QLIVIMLFLTTGLFAALGPIA. Topologically, residues 263 to 269 are extracellular; that stretch reads KALSIQD. Residues 270-290 traverse the membrane as a helical segment; it reads LVIALTYTVLPPFLNPIIYSL. At 291–311 the chain is on the cytoplasmic side; that stretch reads RNKEIKTAMWRLFVKIYFLQK.

Belongs to the G-protein coupled receptor 1 family.

The protein localises to the cell membrane. Odorant receptor. The protein is Olfactory receptor 14I1 (OR14I1) of Homo sapiens (Human).